We begin with the raw amino-acid sequence, 146 residues long: Large ribosomal subunit protein uL23B (146 aa).

The interval 1–22 is disordered; the sequence is MAPSSNKVGKAIQAKKAVVKGS.

Belongs to the universal ribosomal protein uL23 family.

In terms of biological role, this protein binds to a specific region on the 26S rRNA. This is Large ribosomal subunit protein uL23B (rpl-23A.2) from Caenorhabditis elegans.